The following is a 204-amino-acid chain: MERAVLLLSLLSLGVSSQPITDGQRLFSIAVSRVQHLHLLAQRIFSEFESSLQTEEQRQLNKIFLQDFCNSDYIISPIDKHETQRSSVLKLLSISYRLVESWEFPSRSLSGGSVSRNQISPKLSELKTGILLLIKASEDGAELFPDSSALQLAPYGNYYQSLSTDESLRRTYELLACFKKDMHKVETYLTVAKCRLSPEANCTL.

The first 17 residues, 1–17, serve as a signal peptide directing secretion; the sequence is MERAVLLLSLLSLGVSS. Gln18 carries the post-translational modification Pyrrolidone carboxylic acid. His36 contributes to the Zn(2+) binding site. Cys69 and Cys177 are oxidised to a cystine. Position 186 (Glu186) interacts with Zn(2+). Cys194 and Cys202 form a disulfide bridge.

It belongs to the somatotropin/prolactin family.

The protein resides in the secreted. Functionally, growth hormone plays an important role in growth control and involved in the regulation of several anabolic processes. The sequence is that of Somatotropin (gh) from Perca flavescens (American yellow perch).